Consider the following 170-residue polypeptide: MGVDQPLGENIITTSLDSLVNWARKSSIWPMTFGLACCAIEMMATGAAKHDLDRFGIIFRASPRQADCIIIAGTVTKKMLPVIKTVYEQMPEPKWVVAMGACACSGGVFDTYSVVQGIDEALPVDVYIPGCPPRPEALLYGLMKLQDKIANERNSFGSSIGLGERLEPAA.

[4Fe-4S] cluster is bound by residues Cys-37, Cys-38, Cys-102, and Cys-131.

The protein belongs to the complex I 20 kDa subunit family. As to quaternary structure, NDH-1 is composed of 14 different subunits. Subunits NuoB, C, D, E, F, and G constitute the peripheral sector of the complex. It depends on [4Fe-4S] cluster as a cofactor.

It localises to the cell inner membrane. The enzyme catalyses a quinone + NADH + 5 H(+)(in) = a quinol + NAD(+) + 4 H(+)(out). Its function is as follows. NDH-1 shuttles electrons from NADH, via FMN and iron-sulfur (Fe-S) centers, to quinones in the respiratory chain. The immediate electron acceptor for the enzyme in this species is believed to be ubiquinone. Couples the redox reaction to proton translocation (for every two electrons transferred, four hydrogen ions are translocated across the cytoplasmic membrane), and thus conserves the redox energy in a proton gradient. The protein is NADH-quinone oxidoreductase subunit B of Geobacter sp. (strain M21).